The chain runs to 249 residues: INO80 complex subunit 1 (249 aa).

C2H2-type zinc fingers lie at residues 73–100 (YTCE…LRSH) and 106–131 (FICS…RTVH).

Component of the INO80 chromatin remodeling complex.

The protein localises to the nucleus. The protein resides in the cytoplasm. Component of the INO80 complex which remodels chromatin by shifting nucleosomes and is involved in DNA repair. The protein is INO80 complex subunit 1 (iec1) of Schizosaccharomyces pombe (strain 972 / ATCC 24843) (Fission yeast).